The primary structure comprises 431 residues: Glutamate--tRNA ligase 1 (431 aa).

The 'HIGH' region signature appears at 6-16 (PSPTGDMHIGN). The 'KMSKS' region signature appears at 235–239 (KMSKR). Residue Lys238 coordinates ATP.

The protein belongs to the class-I aminoacyl-tRNA synthetase family. Glutamate--tRNA ligase type 1 subfamily. In terms of assembly, monomer.

It is found in the cytoplasm. The catalysed reaction is tRNA(Glu) + L-glutamate + ATP = L-glutamyl-tRNA(Glu) + AMP + diphosphate. Its function is as follows. Catalyzes the attachment of glutamate to tRNA(Glu) in a two-step reaction: glutamate is first activated by ATP to form Glu-AMP and then transferred to the acceptor end of tRNA(Glu). The sequence is that of Glutamate--tRNA ligase 1 from Campylobacter jejuni subsp. jejuni serotype O:23/36 (strain 81-176).